The sequence spans 210 residues: Superoxide dismutase [Mn], mitochondrial (210 aa).

Residues His29, His77, Asp163, and His167 each contribute to the Mn(2+) site.

It belongs to the iron/manganese superoxide dismutase family. In terms of assembly, homotetramer. The cofactor is Mn(2+).

It is found in the mitochondrion matrix. It catalyses the reaction 2 superoxide + 2 H(+) = H2O2 + O2. Functionally, destroys superoxide anion radicals which are normally produced within the cells and which are toxic to biological systems. This Aspergillus fumigatus (strain ATCC MYA-4609 / CBS 101355 / FGSC A1100 / Af293) (Neosartorya fumigata) protein is Superoxide dismutase [Mn], mitochondrial (sodB).